Reading from the N-terminus, the 83-residue chain is MPKKILKGTVVSDKMDKTVVVSVERVFQHPLYKKTIKTRKKYKAHDEENICQLGDMVEIIESSPISKTKRWKVLRIVKEGDTQ.

The protein belongs to the universal ribosomal protein uS17 family. In terms of assembly, part of the 30S ribosomal subunit.

Functionally, one of the primary rRNA binding proteins, it binds specifically to the 5'-end of 16S ribosomal RNA. The protein is Small ribosomal subunit protein uS17 of Thermodesulfovibrio yellowstonii (strain ATCC 51303 / DSM 11347 / YP87).